Consider the following 106-residue polypeptide: uncharacterized protein (106 aa).

This is an uncharacterized protein from Homo sapiens (Human).